The primary structure comprises 89 residues: Protein S100-A6 (89 aa).

EF-hand domains lie at 12 to 47 (LVAI…IGAK) and 48 to 83 (LQDA…LALI). 2 residues coordinate Ca(2+): T28 and E33. Residue K40 is modified to N6-acetyllysine. Residue K47 is modified to N6-acetyllysine; alternate. K47 is modified (N6-succinyllysine; alternate). The Ca(2+) site is built by D61, N63, D65, E67, and E72.

Belongs to the S-100 family. Homodimer; head to tail assembly of 2 subunits. Interacts with CACYBP in a calcium-dependent manner. Interacts with ANXA2 and ANXA11 (via N-terminus). Interacts with SUGT1. Interacts with TP53; has higher affinity for TP53 that is phosphorylated on its N-terminal domain, and lower affinity for TP53 that is phosphorylated on its C-terminal domain. Interacts with tropomyosin. Interacts with FKBP4. Interacts with PPP5C (via TPR repeats); the interaction is calcium-dependent and modulates PPP5C activity. Interacts with TPPP; this interaction inhibits TPPP dimerization.

It is found in the nucleus envelope. It localises to the cytoplasm. The protein localises to the cell membrane. May function as calcium sensor and modulator, contributing to cellular calcium signaling. May function by interacting with other proteins, such as TPR-containing proteins, and indirectly play a role in many physiological processes such as the reorganization of the actin cytoskeleton and in cell motility. Binds 2 calcium ions. Calcium binding is cooperative. The sequence is that of Protein S100-A6 (S100a6) from Rattus norvegicus (Rat).